Reading from the N-terminus, the 227-residue chain is Cytidylate kinase (227 aa).

10–18 is an ATP binding site; sequence GPASSGKST.

Belongs to the cytidylate kinase family. Type 1 subfamily.

The protein localises to the cytoplasm. The catalysed reaction is CMP + ATP = CDP + ADP. It carries out the reaction dCMP + ATP = dCDP + ADP. The chain is Cytidylate kinase from Streptococcus agalactiae serotype V (strain ATCC BAA-611 / 2603 V/R).